The sequence spans 608 residues: Glutamine--fructose-6-phosphate aminotransferase [isomerizing] (608 aa).

Residue cysteine 2 is the Nucleophile; for GATase activity of the active site. Residues 2–217 (CGIVGIVGNQ…DGDWAVIGKT (216 aa)) enclose the Glutamine amidotransferase type-2 domain. 2 consecutive SIS domains span residues 281-422 (ISDA…ARGT) and 456-598 (LSRE…VDQP). Lysine 603 (for Fru-6P isomerization activity) is an active-site residue.

Homodimer.

Its subcellular location is the cytoplasm. The catalysed reaction is D-fructose 6-phosphate + L-glutamine = D-glucosamine 6-phosphate + L-glutamate. In terms of biological role, catalyzes the first step in hexosamine metabolism, converting fructose-6P into glucosamine-6P using glutamine as a nitrogen source. This chain is Glutamine--fructose-6-phosphate aminotransferase [isomerizing], found in Rhizobium meliloti (strain 1021) (Ensifer meliloti).